A 360-amino-acid chain; its full sequence is NAD(P)H-quinone oxidoreductase subunit 1, chloroplastic (360 aa).

The next 8 membrane-spanning stretches (helical) occupy residues 27-47 (IWIF…VLVI), 98-118 (FSIG…VIPF), 129-149 (IGIF…LMSG), 165-185 (AAQS…ISLL), 203-223 (FWGW…ISSL), 253-273 (FGLF…FVTV), 297-317 (IFGT…FLFV), and 340-360 (FLLP…LFSL).

This sequence belongs to the complex I subunit 1 family. In terms of assembly, NDH is composed of at least 16 different subunits, 5 of which are encoded in the nucleus.

Its subcellular location is the plastid. It localises to the chloroplast thylakoid membrane. The enzyme catalyses a plastoquinone + NADH + (n+1) H(+)(in) = a plastoquinol + NAD(+) + n H(+)(out). It catalyses the reaction a plastoquinone + NADPH + (n+1) H(+)(in) = a plastoquinol + NADP(+) + n H(+)(out). NDH shuttles electrons from NAD(P)H:plastoquinone, via FMN and iron-sulfur (Fe-S) centers, to quinones in the photosynthetic chain and possibly in a chloroplast respiratory chain. The immediate electron acceptor for the enzyme in this species is believed to be plastoquinone. Couples the redox reaction to proton translocation, and thus conserves the redox energy in a proton gradient. The protein is NAD(P)H-quinone oxidoreductase subunit 1, chloroplastic of Arabidopsis thaliana (Mouse-ear cress).